We begin with the raw amino-acid sequence, 85 residues long: Small ribosomal subunit protein bS16c (85 aa).

It belongs to the bacterial ribosomal protein bS16 family.

It is found in the plastid. Its subcellular location is the chloroplast. This Saccharum hybrid (Sugarcane) protein is Small ribosomal subunit protein bS16c.